Here is a 459-residue protein sequence, read N- to C-terminus: RuvB-like helicase 1 (459 aa).

An ATP-binding site is contributed by 75–82 (GGPSTGKT).

Belongs to the RuvB family. In terms of assembly, may form heterododecamers with RVB2. Component of the SWR1 chromatin remodeling complex, the INO80 chromatin remodeling complex, and of the R2TP complex.

It localises to the nucleus. The enzyme catalyses ATP + H2O = ADP + phosphate + H(+). Its function is as follows. DNA helicase which participates in several chromatin remodeling complexes, including the SWR1 and the INO80 complexes. The SWR1 complex mediates the ATP-dependent exchange of histone H2A for the H2A variant HZT1 leading to transcriptional regulation of selected genes by chromatin remodeling. The INO80 complex remodels chromatin by shifting nucleosomes and is involved in DNA repair. Also involved in pre-rRNA processing. The polypeptide is RuvB-like helicase 1 (RVB1) (Eremothecium gossypii (strain ATCC 10895 / CBS 109.51 / FGSC 9923 / NRRL Y-1056) (Yeast)).